Reading from the N-terminus, the 658-residue chain is Scarecrow-like protein 28 (658 aa).

Disordered regions lie at residues 43–85, 96–115, and 209–265; these read PCSS…TSGC, LATT…NNNR, and PAAV…NNNR. Over residues 214-228 the composition is skewed to low complexity; that stretch reads EASGGSSTSASSESR. Positions 265 to 654 constitute a GRAS domain; the sequence is RNDLQRDFEL…QPLYTISAWT (390 aa). The tract at residues 272-336 is leucine repeat I (LRI); sequence FELVNLLTGC…VARMWPHIFH (65 aa). The interval 355–420 is VHIID; it reads LRFLNQVTPI…NPPHHVRITG (66 aa). Residues 386–390 carry the VHIID motif; that stretch reads VHIID. Residues 430 to 462 are leucine repeat II (LRII); it reads ETGDRLHGFAEAMNLQFEFHPVVDRLEDVRLWM. The tract at residues 471–563 is PFYRE; that stretch reads VAVNCVMQMH…EMLFGREIRN (93 aa). Positions 566 to 654 are SAW; the sequence is ACEGSHRQER…QPLYTISAWT (89 aa).

It belongs to the GRAS family. In terms of assembly, interacts with SNRNP35 and CYP95. In terms of tissue distribution, expressed in roots and sepals.

It localises to the nucleus. Functionally, probable transcription factor involved in plant development. This chain is Scarecrow-like protein 28 (SCL28), found in Arabidopsis thaliana (Mouse-ear cress).